Reading from the N-terminus, the 121-residue chain is Small ribosomal subunit protein uS13 (121 aa).

A disordered region spans residues Gly94 to Lys121.

The protein belongs to the universal ribosomal protein uS13 family. Part of the 30S ribosomal subunit. Forms a loose heterodimer with protein S19. Forms two bridges to the 50S subunit in the 70S ribosome.

Its function is as follows. Located at the top of the head of the 30S subunit, it contacts several helices of the 16S rRNA. In the 70S ribosome it contacts the 23S rRNA (bridge B1a) and protein L5 of the 50S subunit (bridge B1b), connecting the 2 subunits; these bridges are implicated in subunit movement. Contacts the tRNAs in the A and P-sites. This Ralstonia nicotianae (strain ATCC BAA-1114 / GMI1000) (Ralstonia solanacearum) protein is Small ribosomal subunit protein uS13.